Reading from the N-terminus, the 609-residue chain is ATP-dependent lipid A-core flippase (609 aa).

Transmembrane regions (helical) follow at residues 47–67 (LLAA…IYLI), 88–108 (ILML…VGSF), 167–187 (AIIT…VMFV), 190–210 (WQLS…ISII), 279–299 (VIQI…AIFG), and 305–325 (GSSW…AAIL). One can recognise an ABC transmembrane type-1 domain in the interval 47-340 (LLAAIGSIFF…LTKVNVVIQK (294 aa)). Positions 372–606 (VTIKDLSFAF…GGLYTRLYQS (235 aa)) constitute an ABC transporter domain. 404-411 (GKSGSGKT) is a binding site for ATP.

It belongs to the ABC transporter superfamily. Lipid exporter (TC 3.A.1.106) family. In terms of assembly, homodimer.

The protein localises to the cell inner membrane. The enzyme catalyses ATP + H2O + lipid A-core oligosaccharideSide 1 = ADP + phosphate + lipid A-core oligosaccharideSide 2.. Functionally, involved in lipopolysaccharide (LPS) biosynthesis. Translocates lipid A-core from the inner to the outer leaflet of the inner membrane. Transmembrane domains (TMD) form a pore in the inner membrane and the ATP-binding domain (NBD) is responsible for energy generation. This Francisella tularensis subsp. tularensis (strain FSC 198) protein is ATP-dependent lipid A-core flippase.